A 169-amino-acid chain; its full sequence is Peptide deformylase (169 aa).

Fe cation is bound by residues cysteine 94 and histidine 136. The active site involves glutamate 137. Residue histidine 140 coordinates Fe cation.

This sequence belongs to the polypeptide deformylase family. Fe(2+) serves as cofactor.

It catalyses the reaction N-terminal N-formyl-L-methionyl-[peptide] + H2O = N-terminal L-methionyl-[peptide] + formate. Its function is as follows. Removes the formyl group from the N-terminal Met of newly synthesized proteins. Requires at least a dipeptide for an efficient rate of reaction. N-terminal L-methionine is a prerequisite for activity but the enzyme has broad specificity at other positions. This Phenylobacterium zucineum (strain HLK1) protein is Peptide deformylase.